The sequence spans 358 residues: Peptide chain release factor 1 (358 aa).

An N5-methylglutamine modification is found at Gln233. The disordered stretch occupies residues 286–309; it reads AELASARKSQVGTGDRSERIRTYN.

The protein belongs to the prokaryotic/mitochondrial release factor family. Post-translationally, methylated by PrmC. Methylation increases the termination efficiency of RF1.

The protein resides in the cytoplasm. Its function is as follows. Peptide chain release factor 1 directs the termination of translation in response to the peptide chain termination codons UAG and UAA. In Carboxydothermus hydrogenoformans (strain ATCC BAA-161 / DSM 6008 / Z-2901), this protein is Peptide chain release factor 1.